The chain runs to 633 residues: DNA mismatch repair protein MutL (633 aa).

Belongs to the DNA mismatch repair MutL/HexB family.

This protein is involved in the repair of mismatches in DNA. It is required for dam-dependent methyl-directed DNA mismatch repair. May act as a 'molecular matchmaker', a protein that promotes the formation of a stable complex between two or more DNA-binding proteins in an ATP-dependent manner without itself being part of a final effector complex. The sequence is that of DNA mismatch repair protein MutL from Pseudomonas putida (strain W619).